Consider the following 288-residue polypeptide: Protoheme IX farnesyltransferase (288 aa).

The next 9 membrane-spanning stretches (helical) occupy residues 16–36 (VWSLLVFVGVIGAIVAINRFT), 37–57 (LTNILLILIATVSITLGSMGA), 88–108 (VKGLYFGLILMFLSIIILLFF), 111–131 (YLAAVFMAIGLFDNVFIYSYL), 138–158 (WNIILGGFSGGFPVVIGWYTV), 162–182 (FSVLPWFLFALVVIWIPIHVW), 210–230 (AICISSSAVILFIFSIIPVFF), 236–256 (TYMIVATIIAIPMLVYSVLFV), and 265–285 (LKLFIYSSPYLAIIFVLVLIF).

It belongs to the UbiA prenyltransferase family. Protoheme IX farnesyltransferase subfamily.

The protein resides in the cell membrane. It carries out the reaction heme b + (2E,6E)-farnesyl diphosphate + H2O = Fe(II)-heme o + diphosphate. It functions in the pathway porphyrin-containing compound metabolism; heme O biosynthesis; heme O from protoheme: step 1/1. In terms of biological role, converts heme B (protoheme IX) to heme O by substitution of the vinyl group on carbon 2 of heme B porphyrin ring with a hydroxyethyl farnesyl side group. In Thermoplasma volcanium (strain ATCC 51530 / DSM 4299 / JCM 9571 / NBRC 15438 / GSS1), this protein is Protoheme IX farnesyltransferase.